We begin with the raw amino-acid sequence, 374 residues long: Tetraacyldisaccharide 4'-kinase (374 aa).

66-73 is an ATP binding site; sequence TAGGTGKT.

This sequence belongs to the LpxK family.

It catalyses the reaction a lipid A disaccharide + ATP = a lipid IVA + ADP + H(+). It functions in the pathway glycolipid biosynthesis; lipid IV(A) biosynthesis; lipid IV(A) from (3R)-3-hydroxytetradecanoyl-[acyl-carrier-protein] and UDP-N-acetyl-alpha-D-glucosamine: step 6/6. Functionally, transfers the gamma-phosphate of ATP to the 4'-position of a tetraacyldisaccharide 1-phosphate intermediate (termed DS-1-P) to form tetraacyldisaccharide 1,4'-bis-phosphate (lipid IVA). The sequence is that of Tetraacyldisaccharide 4'-kinase from Syntrophus aciditrophicus (strain SB).